The chain runs to 233 residues: Methyltransferase srdJ (233 aa).

The interval 1-32 is disordered; it reads MFQVQTAGTRTGTSSPDTTTSEAGLGSTPPMP. The span at 9–21 shows a compositional bias: low complexity; that stretch reads TRTGTSSPDTTTS. Residues Trp-40, Trp-52, and Gly-81 each coordinate S-adenosyl-L-methionine. The Required for methyltransferase activity motif lies at 140–146; that stretch reads EISSQKY.

It belongs to the methyltransferase superfamily.

Methyltransferase; part of the gene cluster that mediates the biosynthesis of sordarial, a salicylic aldehyde structurally related to the phytotoxin pyriculol. The most interesting aspect of this pathway is formation of an aromatic product from the highly reducing polyketide synthase srdA. SrdA synthesizes a reduced polyketide chain from one molecule of acetyl-CoA and five molecules of malonyl-CoA. The polyketide chain is then reductively released as an aldehyde. The oxidoreductases srdC, srdD and srdE then oxidize one of the hydroxy groups to facilitate the intramolecular aldol condensation, followed by dehydration to yield a salicylic aldehyde. This aldehyde can undergo facile reduction by endogenous reductases to yield the alcohol 1-hydroxy-2-hydroxymethyl-3-pent-1,3-dienylbenzene. The flavin-dependent srdI counteract against the propensity of the aldehydes to be reduced under physiological conditions and is responsible for reoxidizing 1-hydroxy-2-hydroxymethyl-3-pent-1,3-dienylbenzene back to the salicylic aldehyde. This salicylic aldehyde is then selectively epoxidized by the cupin-domain-containing oxidoreductase srdB to yield the epoxide, which can be hydrolyzed stereoselectively by the hydrolase srdG to give the final product sordarial. The protein is Methyltransferase srdJ of Neurospora crassa (strain ATCC 24698 / 74-OR23-1A / CBS 708.71 / DSM 1257 / FGSC 987).